Here is a 278-residue protein sequence, read N- to C-terminus: MSSPPASTDHRLVGSTTGAPDTPSAAATPLPQTLWSLQVPLHITHASKSTAPFIVSVPRFSYLALLLPRLTAYYGLPCSSFHHEEIQLRNLAVGLLVDLYQPATLPWRLVVGDGPEWDIADTFTNSAKEADFVRNGNAKQIMSLSKEHSTALWNAVQDNDHVSFGKVNRRLLNTPSPFKNVPIRIYIPSSPNDTGDATPGSFKVVQNLVSPRLPNRAPQTLGAALKSMLPTLFPSSRDPVLANVILHGGPVPFRAPLEELMREAAYPDGWLCLCVVLL.

Residues 1 to 25 (MSSPPASTDHRLVGSTTGAPDTPSA) form a disordered region. Lysine 128 is covalently cross-linked (Glycyl lysine isopeptide (Lys-Gly) (interchain with G-Cter in ATG12)).

Belongs to the ATG5 family. Conjugated with ATG12. In terms of processing, conjugated to ATG12; which is essential for autophagy.

Its subcellular location is the preautophagosomal structure membrane. In terms of biological role, involved in cytoplasm to vacuole transport (Cvt) and autophagic vesicle formation. Autophagy is essential for maintenance of amino acid levels and protein synthesis under nitrogen starvation. Required for selective autophagic degradation of the nucleus (nucleophagy). Also required for mitophagy, which eliminates defective or superfluous mitochondria in order to fulfill cellular energy requirements and prevent excess ROS production. Conjugation with ATG12, through a ubiquitin-like conjugating system involving ATG7 as an E1-like activating enzyme and ATG10 as an E2-like conjugating enzyme, is essential for its function. The ATG12-ATG5 conjugate acts as an E3-like enzyme which is required for lipidation of ATG8 and ATG8 association to the vesicle membranes. The sequence is that of Autophagy protein 5 (ATG5) from Chaetomium globosum (strain ATCC 6205 / CBS 148.51 / DSM 1962 / NBRC 6347 / NRRL 1970) (Soil fungus).